The chain runs to 478 residues: Leukotoxin secretion protein D (478 aa).

Residues 1–77 are Cytoplasmic-facing; that stretch reads MKIWLSGIYE…LAVAIVLASV (77 aa). Residues 78–98 form a helical membrane-spanning segment; it reads SKVEIVATAPGKLTFSGRSKE. At 99–478 the chain is on the periplasmic side; sequence IKPIENTIVQ…ESVTESLRER (380 aa).

The protein belongs to the membrane fusion protein (MFP) (TC 8.A.1) family.

The protein resides in the cell inner membrane. In terms of biological role, involved in the transport of the Leukotoxin. This Pasteurella haemolytica-like sp. (strain 5943B) protein is Leukotoxin secretion protein D (lktD).